We begin with the raw amino-acid sequence, 143 residues long: Large-conductance mechanosensitive channel (143 aa).

3 helical membrane-spanning segments follow: residues 16 to 36 (VMDL…TNSL), 40 to 60 (IIMP…NMFI), and 87 to 107 (GSFI…FMMV).

It belongs to the MscL family. As to quaternary structure, homopentamer.

The protein localises to the cell inner membrane. Functionally, channel that opens in response to stretch forces in the membrane lipid bilayer. May participate in the regulation of osmotic pressure changes within the cell. This Psychrobacter sp. (strain PRwf-1) protein is Large-conductance mechanosensitive channel.